We begin with the raw amino-acid sequence, 400 residues long: Subtilisin-like protease 7 (400 aa).

The first 20 residues, 1 to 20, serve as a signal peptide directing secretion; sequence MGFITKAIPLALAAMSVVNG. The propeptide occupies 21-119; it reads AEILETRAGV…IERDARVQIN (99 aa). In terms of domain architecture, Inhibitor I9 spans 36 to 118; sequence KYIVIMNDGV…YIERDARVQI (83 aa). The region spanning 129–400 is the Peptidase S8 domain; the sequence is SWGLARVGSR…GKLINNGSGK (272 aa). Active-site charge relay system residues include Asp161 and His192. 2 N-linked (GlcNAc...) asparagine glycosylation sites follow: Asn222 and Asn252. The active-site Charge relay system is the Ser346. N-linked (GlcNAc...) asparagine glycosylation occurs at Asn396.

The protein belongs to the peptidase S8 family.

It is found in the secreted. Functionally, secreted subtilisin-like serine protease with keratinolytic activity that contributes to pathogenicity. The sequence is that of Subtilisin-like protease 7 (SUB7) from Arthroderma otae (strain ATCC MYA-4605 / CBS 113480) (Microsporum canis).